We begin with the raw amino-acid sequence, 183 residues long: Peptidyl-tRNA hydrolase (183 aa).

Tyrosine 14 is a tRNA binding site. Histidine 19 functions as the Proton acceptor in the catalytic mechanism. TRNA contacts are provided by tyrosine 61, asparagine 63, and asparagine 109.

This sequence belongs to the PTH family. In terms of assembly, monomer.

The protein localises to the cytoplasm. It catalyses the reaction an N-acyl-L-alpha-aminoacyl-tRNA + H2O = an N-acyl-L-amino acid + a tRNA + H(+). Hydrolyzes ribosome-free peptidyl-tRNAs (with 1 or more amino acids incorporated), which drop off the ribosome during protein synthesis, or as a result of ribosome stalling. Functionally, catalyzes the release of premature peptidyl moieties from peptidyl-tRNA molecules trapped in stalled 50S ribosomal subunits, and thus maintains levels of free tRNAs and 50S ribosomes. This is Peptidyl-tRNA hydrolase from Aliarcobacter butzleri (strain RM4018) (Arcobacter butzleri).